The chain runs to 770 residues: MASLVYRQLLANSYTSDLQDTIDDISAQKTENVTVNPGPFAQTGYALVEWTHGDITTDETVQQTLDGPYAPSSVIIQPQYWVLMNPETADVIAEADATNKKYACVMLAPNTEEGDKQYTILGRQITINLGNTDQNRYKFFDLASENGETYSKIQELLTPNRLNAFMKDQGRLYVYHGTVPNISTGYYTLDDIANVQTNIKCNYYIVPKSQTQQLEDFLKNGLPPIQESRYIMPVERSVQNIYRAKPNEDIVISKTSLWKEMQYNRDIVIRFKFGNTIIKSGGLGYKWSEISYKPMNYEYTYERDGETVVAHTTCSVAGVNDFGYNSGSLPTDFVVSKYEVLKGNSYVYIDYWDDSQAFKNMVYVRSLSAEFNAINCTGGTYDFQLPVGQWPQMRGGNVTLNSDAVTLSTQYTDFVSLNSLRFRFKPAIGEPFFEITRTRETRLYGLPASNPMGGNEYYETAGRFSLISLVPSNDDYQTPIQNSTTVRQDLEQQISDLREEFNQLSSEIAMSQLIDLALLPLDMFSMFSGIKSTIDAVKSVTTSVMKKMKTSTLAKSVSTITEELSDAATSVSRASSIRSNASVWNNLVDTRTQTSVATNDIATQTSRIASKLRVKEFATQTEGGLSFNDISAAVLKTKIDKIETVQPKILPTIITESVDKFIPTRQYRIIDKDIAYEISNSGKYFAYRVDTFEEVIFDVEKFADLVTDSPVISAIIDFKTLKNLNDNFGITKEQAYNLLRSDPRVLKDFINQNNPIIRNRIEQLILQCRI.

Residues 65-222 (LDGPYAPSSV…QLEDFLKNGL (158 aa)) form a spike head region. The spike body and stalk (antigen domain) stretch occupies residues 244-475 (AKPNEDIVIS…LISLVPSNDD (232 aa)). Positions 304 to 306 (DGE) match the DGE motif; interaction with ITGA2/ITGB1 heterodimer motif. Cysteines 314 and 376 form a disulfide. Positions 385-405 (LPVGQWPQMRGGNVTLNSDAV) are hydrophobic; possible role in virus entry into host cell. The YGL motif; interaction with ITGA4 motif lies at 444 to 446 (YGL). Positions 480 to 507 (IQNSTTVRQDLEQQISDLREEFNQLSSE) form a coiled coil. Residues 506 to 770 (SEIAMSQLID…IEQLILQCRI (265 aa)) are spike foot. The KID motif; interaction with HSPA8 motif lies at 638 to 640 (KID).

It belongs to the rotavirus VP4 family. As to quaternary structure, homotrimer. VP4 adopts a dimeric appearance above the capsid surface, while forming a trimeric base anchored inside the capsid layer. Only hints of the third molecule are observed above the capsid surface. It probably performs a series of molecular rearrangements during viral entry. Prior to trypsin cleavage, it is flexible. The priming trypsin cleavage triggers its rearrangement into rigid spikes with approximate two-fold symmetry of their protruding parts. After an unknown second triggering event, cleaved VP4 may undergo another rearrangement, in which two VP5* subunits fold back on themselves and join a third subunit to form a tightly associated trimer, shaped like a folded umbrella. Interacts with VP6. Interacts with VP7. Homotrimer. The trimer is coiled-coil stabilized by its C-terminus, however, its N-terminus, known as antigen domain or 'body', seems to be flexible allowing it to self-associate either as a dimer or a trimer. In terms of processing, proteolytic cleavage by trypsin results in activation of VP4 functions and greatly increases infectivity. The penetration into the host cell is dependent on trypsin treatment of VP4. It produces two peptides, VP5* and VP8* that remain associated with the virion. Cleavage of VP4 by trypsin probably occurs in vivo in the lumen of the intestine prior to infection of enterocytes. Trypsin seems to be incorporated into the three-layered viral particles but remains inactive as long as the viral outer capsid is intact and would only be activated upon the solubilization of the latter.

The protein localises to the virion. The protein resides in the host rough endoplasmic reticulum. It localises to the host cell membrane. It is found in the host cytoplasm. Its subcellular location is the host cytoskeleton. The protein localises to the host endoplasmic reticulum-Golgi intermediate compartment. In terms of biological role, spike-forming protein that mediates virion attachment to the host epithelial cell receptors and plays a major role in cell penetration, determination of host range restriction and virulence. Rotavirus attachment and entry into the host cell probably involves multiple sequential contacts between the outer capsid proteins VP4 and VP7, and the cell receptors. It is subsequently lost, together with VP7, following virus entry into the host cell. Following entry into the host cell, low intracellular or intravesicular Ca(2+) concentration probably causes the calcium-stabilized VP7 trimers to dissociate from the virion. This step is probably necessary for the membrane-disrupting entry step and the release of VP4, which is locked onto the virion by VP7. During the virus exit from the host cell, VP4 seems to be required to target the newly formed virions to the host cell lipid rafts. Its function is as follows. Forms the spike 'foot' and 'body' and acts as a membrane permeabilization protein that mediates release of viral particles from endosomal compartments into the cytoplasm. During entry, the part of VP5* that protrudes from the virus folds back on itself and reorganizes from a local dimer to a trimer. This reorganization may be linked to membrane penetration by exposing VP5* hydrophobic region. In integrin-dependent strains, VP5* targets the integrin heterodimer ITGA2/ITGB1 for cell attachment. Forms the head of the spikes and mediates the recognition of specific host cell surface glycans. It is the viral hemagglutinin and an important target of neutralizing antibodies. In sialic acid-dependent strains, VP8* binds to host cell sialic acid, most probably a ganglioside, providing the initial contact. In some other strains, VP8* mediates the attachment to histo-blood group antigens (HBGAs) for viral entry. The sequence is that of Outer capsid protein VP4 from Bos taurus (Bovine).